The primary structure comprises 148 residues: Putative lysozyme C-2 (148 aa).

Residues 1 to 18 form the signal peptide; the sequence is MKALLVLGFLLLSASVQA. The C-type lysozyme domain maps to 19-148; that stretch reads KVFKHCELAR…LSGYIRNCGV (130 aa). Cystine bridges form between Cys24–Cys146, Cys48–Cys134, Cys83–Cys99, and Cys95–Cys113. Catalysis depends on residues Glu53 and Asp71.

The protein belongs to the glycosyl hydrolase 22 family. Monomer.

Its subcellular location is the secreted. It catalyses the reaction Hydrolysis of (1-&gt;4)-beta-linkages between N-acetylmuramic acid and N-acetyl-D-glucosamine residues in a peptidoglycan and between N-acetyl-D-glucosamine residues in chitodextrins.. Functionally, lysozymes have primarily a bacteriolytic function; those in tissues and body fluids are associated with the monocyte-macrophage system and enhance the activity of immunoagents. In the intestine they may also have a digestive function. In Rattus norvegicus (Rat), this protein is Putative lysozyme C-2 (Lyz2).